The following is a 387-amino-acid chain: Chaperone protein DnaJ (387 aa).

The J domain occupies 5 to 70; the sequence is DYYEVLGLQK…DKKAKYDQFG (66 aa). The segment at 144 to 226 adopts a CR-type zinc-finger fold; it reads GCEKEISITR…CKGKGTVRKN (83 aa). Zn(2+)-binding residues include C157, C160, C174, C177, C200, C203, C214, and C217. 4 CXXCXGXG motif repeats span residues 157–164, 174–181, 200–207, and 214–221; these read CETCHGTG, CPKCNGSG, CDQCGGTG, and CPDCKGKG.

This sequence belongs to the DnaJ family. Homodimer. The cofactor is Zn(2+).

Its subcellular location is the cytoplasm. Participates actively in the response to hyperosmotic and heat shock by preventing the aggregation of stress-denatured proteins and by disaggregating proteins, also in an autonomous, DnaK-independent fashion. Unfolded proteins bind initially to DnaJ; upon interaction with the DnaJ-bound protein, DnaK hydrolyzes its bound ATP, resulting in the formation of a stable complex. GrpE releases ADP from DnaK; ATP binding to DnaK triggers the release of the substrate protein, thus completing the reaction cycle. Several rounds of ATP-dependent interactions between DnaJ, DnaK and GrpE are required for fully efficient folding. Also involved, together with DnaK and GrpE, in the DNA replication of plasmids through activation of initiation proteins. The sequence is that of Chaperone protein DnaJ from Clostridium perfringens (strain 13 / Type A).